A 1046-amino-acid polypeptide reads, in one-letter code: Protein HBT1 (1046 aa).

3 disordered regions span residues 1–455 (MNMN…AAEK), 469–894 (DYQQ…LGGA), and 908–1046 (PSLI…RSEI). Ser41 is subject to Phosphoserine. Over residues 81–96 (KDSETPHEDTEADANR) the composition is skewed to basic and acidic residues. Polar residues-rich tracts occupy residues 98 to 149 (ANVT…SPPT), 175 to 191 (IATT…TSPV), and 228 to 301 (ANTG…NTDS). A Phosphoserine modification is found at Ser303. A compositionally biased stretch (polar residues) spans 327–341 (VYTSTGPKSNVSSGM). Residue Ser363 is modified to Phosphoserine. 2 stretches are compositionally biased toward polar residues: residues 389-408 (QTGL…QQTM) and 420-429 (GFVSQQPSYH). Positions 430–455 (DSNKNIQHPEKNKVDNKNISERAAEK) are enriched in basic and acidic residues. Over residues 488–498 (YSSSAGKNKNL) the composition is skewed to polar residues. The residue at position 491 (Ser491) is a Phosphoserine. Over residues 529–538 (GHMKYNDNGR) the composition is skewed to basic and acidic residues. Over residues 548–559 (QAGSQNTNNNID) the composition is skewed to polar residues. At Ser561 the chain carries Phosphoserine. The segment covering 570-582 (GLSNDATTRNNVV) has biased composition (polar residues). Positions 586-597 (MKDEDMNEDSTK) are enriched in basic and acidic residues. Residues 605-619 (YLDDVEDYHENDIDD) are compositionally biased toward acidic residues. A compositionally biased stretch (basic and acidic residues) spans 621-630 (SNAKKNDLYS). Ser671 carries the post-translational modification Phosphoserine. Residues 742 to 756 (FTNNPETGTTGNVDT) show a composition bias toward polar residues. A compositionally biased stretch (basic and acidic residues) spans 773-782 (DDSKNTDTHL). Polar residues-rich tracts occupy residues 792 to 802 (NSRSGDTTYSK) and 837 to 855 (SSEQ…NQEY). Tyr855 carries the phosphotyrosine modification. Ser857 bears the Phosphoserine mark. Positions 868–890 (KVLEEDAPGYKREVDLKNKRRTD) are enriched in basic and acidic residues. A compositionally biased stretch (polar residues) spans 922–951 (DTNTSSSQKPSEGTYPETTSYSIHNETTSQ). Positions 952 to 963 (GRKVSVGSMGSG) are enriched in low complexity. Over residues 964-976 (KSKHHHNHHRHSR) the composition is skewed to basic residues. Phosphoserine is present on Ser1005. Over residues 1006–1019 (DEGEQDYHDDEQGE) the composition is skewed to acidic residues. Residue Ser1034 is modified to Phosphoserine.

Conjugated with HUB1. HUB1 has not the classical C-terminal Gly residue, so it is still unknown how conjugation may occur.

It localises to the cytoplasm. Functionally, polarity-determining protein which forms a conjugate with the ubiquitin-like modifier HUB1. Involved in bud site selection and cellular morphogenesis during conjugation. Required for survival during stationary phase. This is Protein HBT1 (HBT1) from Saccharomyces cerevisiae (strain ATCC 204508 / S288c) (Baker's yeast).